The chain runs to 292 residues: 4-diphosphocytidyl-2-C-methyl-D-erythritol kinase (292 aa).

K11 is a catalytic residue. 95–105 (PVSAGLAGGSS) serves as a coordination point for ATP. Residue D137 is part of the active site.

It belongs to the GHMP kinase family. IspE subfamily.

It catalyses the reaction 4-CDP-2-C-methyl-D-erythritol + ATP = 4-CDP-2-C-methyl-D-erythritol 2-phosphate + ADP + H(+). It functions in the pathway isoprenoid biosynthesis; isopentenyl diphosphate biosynthesis via DXP pathway; isopentenyl diphosphate from 1-deoxy-D-xylulose 5-phosphate: step 3/6. Functionally, catalyzes the phosphorylation of the position 2 hydroxy group of 4-diphosphocytidyl-2C-methyl-D-erythritol. This chain is 4-diphosphocytidyl-2-C-methyl-D-erythritol kinase, found in Alkaliphilus oremlandii (strain OhILAs) (Clostridium oremlandii (strain OhILAs)).